The primary structure comprises 411 residues: GPI-anchor transamidase (411 aa).

The N-terminal stretch at 1 to 22 (MRIAMHLPLLLLYIFLLPLSGA) is a signal peptide. Residues 23–376 (NNTDAAHEVI…DIDSNECFFT (354 aa)) are Lumenal-facing. Catalysis depends on residues His-157 and Cys-199. 2 N-linked (GlcNAc...) asparagine glycosylation sites follow: Asn-256 and Asn-346. A helical transmembrane segment spans residues 377 to 397 (SFKQSATIILALIVTILWFML). At 398 to 411 (RGNTAKATYDLYTN) the chain is on the cytoplasmic side.

The protein belongs to the peptidase C13 family. Forms a complex with CDC91, GPI16, GPI17 and GAA1. Post-translationally, the disulfide bond between GPI8 and GPI16 is important for normal enzyme activity.

It is found in the endoplasmic reticulum membrane. Its pathway is glycolipid biosynthesis; glycosylphosphatidylinositol-anchor biosynthesis. Its function is as follows. Mediates GPI anchoring in the endoplasmic reticulum, by replacing a protein's C-terminal GPI attachment signal peptide with a pre-assembled GPI. During this transamidation reaction, the GPI transamidase forms a carbonyl intermediate with the substrate protein. This chain is GPI-anchor transamidase (GPI8), found in Saccharomyces cerevisiae (strain ATCC 204508 / S288c) (Baker's yeast).